Consider the following 85-residue polypeptide: Large ribosomal subunit protein bL31B (85 aa).

Belongs to the bacterial ribosomal protein bL31 family. Type B subfamily. As to quaternary structure, part of the 50S ribosomal subunit.

The protein is Large ribosomal subunit protein bL31B of Aliivibrio salmonicida (strain LFI1238) (Vibrio salmonicida (strain LFI1238)).